A 337-amino-acid chain; its full sequence is tRNA N6-adenosine threonylcarbamoyltransferase (337 aa).

H111 and H115 together coordinate Fe cation. Residues 134–138 (LVSGG), D167, G180, and N272 contribute to the substrate site. Fe cation is bound at residue D300.

It belongs to the KAE1 / TsaD family. Requires Fe(2+) as cofactor.

It localises to the cytoplasm. It catalyses the reaction L-threonylcarbamoyladenylate + adenosine(37) in tRNA = N(6)-L-threonylcarbamoyladenosine(37) in tRNA + AMP + H(+). Required for the formation of a threonylcarbamoyl group on adenosine at position 37 (t(6)A37) in tRNAs that read codons beginning with adenine. Is involved in the transfer of the threonylcarbamoyl moiety of threonylcarbamoyl-AMP (TC-AMP) to the N6 group of A37, together with TsaE and TsaB. TsaD likely plays a direct catalytic role in this reaction. This chain is tRNA N6-adenosine threonylcarbamoyltransferase, found in Shewanella loihica (strain ATCC BAA-1088 / PV-4).